A 489-amino-acid chain; its full sequence is Rhamnulokinase (489 aa).

Residue 13–17 (ASSGR) participates in ATP binding. Cysteines 68 and 222 form a disulfide. Residues Gly83 and 236–238 (HDT) contribute to the substrate site. Residue Asp237 is the Proton acceptor of the active site. Residue Thr259 participates in ATP binding. Asn296 is a binding site for substrate. Residue Gln304 participates in ATP binding. An intrachain disulfide couples Cys353 to Cys370. Gly402 contributes to the ATP binding site. Cys413 and Cys417 form a disulfide bridge.

The protein belongs to the rhamnulokinase family. The cofactor is Mg(2+).

The catalysed reaction is L-rhamnulose + ATP = L-rhamnulose 1-phosphate + ADP + H(+). Its pathway is carbohydrate degradation; L-rhamnose degradation; glycerone phosphate from L-rhamnose: step 2/3. In terms of biological role, involved in the catabolism of L-rhamnose (6-deoxy-L-mannose). Catalyzes the transfer of the gamma-phosphate group from ATP to the 1-hydroxyl group of L-rhamnulose to yield L-rhamnulose 1-phosphate. The polypeptide is Rhamnulokinase (Salmonella choleraesuis (strain SC-B67)).